The following is a 282-amino-acid chain: Phosphatidylserine decarboxylase proenzyme (282 aa).

Catalysis depends on charge relay system; for autoendoproteolytic cleavage activity residues D88, H144, and S247. Catalysis depends on S247, which acts as the Schiff-base intermediate with substrate; via pyruvic acid; for decarboxylase activity. At S247 the chain carries Pyruvic acid (Ser); by autocatalysis.

This sequence belongs to the phosphatidylserine decarboxylase family. PSD-B subfamily. Prokaryotic type I sub-subfamily. In terms of assembly, heterodimer of a large membrane-associated beta subunit and a small pyruvoyl-containing alpha subunit. The cofactor is pyruvate. In terms of processing, is synthesized initially as an inactive proenzyme. Formation of the active enzyme involves a self-maturation process in which the active site pyruvoyl group is generated from an internal serine residue via an autocatalytic post-translational modification. Two non-identical subunits are generated from the proenzyme in this reaction, and the pyruvate is formed at the N-terminus of the alpha chain, which is derived from the carboxyl end of the proenzyme. The autoendoproteolytic cleavage occurs by a canonical serine protease mechanism, in which the side chain hydroxyl group of the serine supplies its oxygen atom to form the C-terminus of the beta chain, while the remainder of the serine residue undergoes an oxidative deamination to produce ammonia and the pyruvoyl prosthetic group on the alpha chain. During this reaction, the Ser that is part of the protease active site of the proenzyme becomes the pyruvoyl prosthetic group, which constitutes an essential element of the active site of the mature decarboxylase.

It is found in the cell membrane. It catalyses the reaction a 1,2-diacyl-sn-glycero-3-phospho-L-serine + H(+) = a 1,2-diacyl-sn-glycero-3-phosphoethanolamine + CO2. The protein operates within phospholipid metabolism; phosphatidylethanolamine biosynthesis; phosphatidylethanolamine from CDP-diacylglycerol: step 2/2. Functionally, catalyzes the formation of phosphatidylethanolamine (PtdEtn) from phosphatidylserine (PtdSer). The protein is Phosphatidylserine decarboxylase proenzyme of Xanthomonas oryzae pv. oryzae (strain KACC10331 / KXO85).